Here is a 344-residue protein sequence, read N- to C-terminus: C-C chemokine receptor-like 2 (344 aa).

Residues 1 to 43 (MANYTLAPEDEYDVLIEGELESDEAEQCDRYDTWALSAQLVPS) lie on the Extracellular side of the membrane. N3 carries an N-linked (GlcNAc...) asparagine glycan. A helical membrane pass occupies residues 44–64 (LCSAVFVVGVLDNLLVVLILV). The Cytoplasmic portion of the chain corresponds to 65–74 (KYKGLKRVEN). A helical membrane pass occupies residues 75–95 (IYLLNLAVSNLCFLLTLPFWA). Topologically, residues 96–104 (HAGGDPMCK) are extracellular. C103 and C181 form a disulfide bridge. Residues 105–125 (ILIGLYFVGLYSETFFNCLLT) traverse the membrane as a helical segment. Over 126 to 148 (LQRYLVFLHKGNFFSVRRRVPCG) the chain is Cytoplasmic. Residues 149–169 (IVTSAVAWVTAILATVPEFAV) traverse the membrane as a helical segment. Topologically, residues 170 to 198 (YKPQMEDPKYKCAFSRTPFLPADETFWKH) are extracellular. A helical transmembrane segment spans residues 199-219 (FLTLKMNVSVLVFPLFIFTFL). Over 220–238 (YVQMRKTLRFGEQRYSLFK) the chain is Cytoplasmic. The chain crosses the membrane as a helical span at residues 239 to 259 (LVFAIMVVFLLMWAPYNIALF). The Extracellular portion of the chain corresponds to 260-281 (LSTFKEHFSLSDCKSNYNLDKS). A helical membrane pass occupies residues 282–302 (VLITKLIATTHCCVNPLLYVF). At 303–344 (LDGTFRKYLCRFFHRRSNTPRQPRRRFAQGTSREEPDRSTEV) the chain is on the cytoplasmic side. The segment at 323 to 344 (RQPRRRFAQGTSREEPDRSTEV) is disordered. Residues 334-344 (SREEPDRSTEV) show a composition bias toward basic and acidic residues.

This sequence belongs to the G-protein coupled receptor 1 family.

It localises to the cell membrane. Its function is as follows. Receptor for CCL19 and chemerin/RARRES2. Does not appear to be a signaling receptor, but may have a role in modulating chemokine-triggered immune responses by capturing and internalizing CCL19 or by presenting RARRES2 ligand to CMKLR1, a functional signaling receptor. Plays a critical role for the development of Th2 responses. This is C-C chemokine receptor-like 2 (CCRL2) from Macaca mulatta (Rhesus macaque).